Consider the following 77-residue polypeptide: UPF0154 protein LCK_00994 (77 aa).

The helical transmembrane segment at 5–25 threads the bilayer; sequence FGILIFVLGLVIGLVIGFFVA. The disordered stretch occupies residues 50 to 77; sequence SMGQKPSQKKLNQMMAQMKQQSEQSQKK.

Belongs to the UPF0154 family.

It is found in the cell membrane. In Leuconostoc citreum (strain KM20), this protein is UPF0154 protein LCK_00994.